The primary structure comprises 324 residues: Phosphomevalonate decarboxylase (324 aa).

This sequence belongs to the phosphomevalonate decarboxylase family.

The enzyme catalyses (R)-5-phosphomevalonate + ATP = isopentenyl phosphate + ADP + phosphate + CO2. With respect to regulation, is strongly inhibited by 6-fluoromevalonate monophosphate but shows negligible inhibition by 6-fluoromevalonate diphosphate (a potent inhibitor of the classical mevalonate pathway). Its function is as follows. Catalyzes the decarboxylation of mevalonate 5-phosphate (MVAP) to isopentenyl phosphate (IP). Functions in an alternate mevalonate (MVA) pathway leading to isopentenyl diphosphate (IPP), a key precursor for the biosynthesis of isoprenoid compounds such as archaeal membrane lipids. This chain is Phosphomevalonate decarboxylase (mvaD), found in Haloferax volcanii (strain ATCC 29605 / DSM 3757 / JCM 8879 / NBRC 14742 / NCIMB 2012 / VKM B-1768 / DS2) (Halobacterium volcanii).